The primary structure comprises 102 residues: Fe-S protein maturation auxiliary factor YitW (102 aa).

The protein belongs to the MIP18 family.

Its function is as follows. Involved in the maturation of iron-sulfur (Fe-S) proteins. May function as a Fe-S cluster carrier. In Bacillus subtilis (strain 168), this protein is Fe-S protein maturation auxiliary factor YitW (yitW).